Here is a 185-residue protein sequence, read N- to C-terminus: dCTP deaminase (185 aa).

DCTP contacts are provided by residues 107–112 (KSTYAR), 131–133 (TLE), Q152, Y166, and Q176. The active-site Proton donor/acceptor is the E133.

The protein belongs to the dCTP deaminase family. As to quaternary structure, homotrimer.

The enzyme catalyses dCTP + H2O + H(+) = dUTP + NH4(+). Its pathway is pyrimidine metabolism; dUMP biosynthesis; dUMP from dCTP (dUTP route): step 1/2. Functionally, catalyzes the deamination of dCTP to dUTP. The sequence is that of dCTP deaminase from Neorickettsia sennetsu (strain ATCC VR-367 / Miyayama) (Ehrlichia sennetsu).